A 99-amino-acid polypeptide reads, in one-letter code: Sperm protein associated with the nucleus on the X chromosome N4 (99 aa).

The span at 1-10 (MEEPTSSTNE) shows a compositional bias: polar residues. A disordered region spans residues 1–99 (MEEPTSSTNE…AGSPQDGGQN (99 aa)). The span at 11-22 (NKMKSPCESNKR) shows a compositional bias: basic and acidic residues. Positions 23-32 (KVDKKKKNLH) are enriched in basic residues. Residues 64-78 (SNQLENNQPTESSTD) show a composition bias toward polar residues.

It belongs to the SPAN-X family.

The sequence is that of Sperm protein associated with the nucleus on the X chromosome N4 (SPANXN4) from Homo sapiens (Human).